The primary structure comprises 209 residues: Imidazole glycerol phosphate synthase subunit HisH (209 aa).

A Glutamine amidotransferase type-1 domain is found at 1–205; the sequence is MIAIIDYGMG…QGVVEAWKSS (205 aa). The active-site Nucleophile is C79. Residues H180 and E182 contribute to the active site.

In terms of assembly, heterodimer of HisH and HisF.

The protein localises to the cytoplasm. The catalysed reaction is 5-[(5-phospho-1-deoxy-D-ribulos-1-ylimino)methylamino]-1-(5-phospho-beta-D-ribosyl)imidazole-4-carboxamide + L-glutamine = D-erythro-1-(imidazol-4-yl)glycerol 3-phosphate + 5-amino-1-(5-phospho-beta-D-ribosyl)imidazole-4-carboxamide + L-glutamate + H(+). It catalyses the reaction L-glutamine + H2O = L-glutamate + NH4(+). The protein operates within amino-acid biosynthesis; L-histidine biosynthesis; L-histidine from 5-phospho-alpha-D-ribose 1-diphosphate: step 5/9. Functionally, IGPS catalyzes the conversion of PRFAR and glutamine to IGP, AICAR and glutamate. The HisH subunit catalyzes the hydrolysis of glutamine to glutamate and ammonia as part of the synthesis of IGP and AICAR. The resulting ammonia molecule is channeled to the active site of HisF. In Bacillus cereus (strain ATCC 14579 / DSM 31 / CCUG 7414 / JCM 2152 / NBRC 15305 / NCIMB 9373 / NCTC 2599 / NRRL B-3711), this protein is Imidazole glycerol phosphate synthase subunit HisH.